A 522-amino-acid chain; its full sequence is Probable mannosyltransferase KTR5 (522 aa).

Over 1–16 the chain is Cytoplasmic; that stretch reads MLLIRRTINAFLGCIH. The helical; Signal-anchor for type II membrane protein transmembrane segment at 17–37 threads the bilayer; that stretch reads CNLTATCILIAFVITMYVVLV. Residues 38–82 are stem region; the sequence is SEPASVDGTMGNFLPFSKMDLATKRDRPFYSNCVNTQDYLLNPSY. Residues 38 to 522 lie on the Lumenal side of the membrane; the sequence is SEPASVDGTM…REDYLRQFGN (485 aa). The segment at 83–522 is catalytic; it reads IKQNASFVML…REDYLRQFGN (440 aa). An N-linked (GlcNAc...) asparagine glycan is attached at Asn86. Residue Glu363 is the Nucleophile of the active site.

Belongs to the glycosyltransferase 15 family.

The protein resides in the membrane. Its function is as follows. Possible glycosyltransferase that transfers an alpha-D-mannosyl residue from GDP-mannose into lipid-linked oligosaccharide, forming an alpha-(1-&gt;2)-D-mannosyl-D-mannose linkage. The protein is Probable mannosyltransferase KTR5 (KTR5) of Saccharomyces cerevisiae (strain ATCC 204508 / S288c) (Baker's yeast).